The chain runs to 197 residues: Endoribonuclease YbeY (197 aa).

The Zn(2+) site is built by H156, H160, and H166.

The protein belongs to the endoribonuclease YbeY family. Requires Zn(2+) as cofactor.

The protein resides in the cytoplasm. Single strand-specific metallo-endoribonuclease involved in late-stage 70S ribosome quality control and in maturation of the 3' terminus of the 16S rRNA. This Cupriavidus metallidurans (strain ATCC 43123 / DSM 2839 / NBRC 102507 / CH34) (Ralstonia metallidurans) protein is Endoribonuclease YbeY.